A 264-amino-acid polypeptide reads, in one-letter code: Transmembrane protein 41A (264 aa).

The first 17 residues, 1-17 (MRALLGLLLVFGGCTFA), serve as a signal peptide directing secretion. 5 consecutive transmembrane segments (helical) span residues 67–87 (AYVF…AIPG), 100–122 (GPWL…CYLL), 153–173 (LFFF…FLNL), 175–195 (APIL…GLIP), and 219–239 (WETV…GTLI). The VTT domain stretch occupies residues 96-207 (GALFGPWLGL…FICVQTGSIL (112 aa)).

It belongs to the TMEM41 family.

The protein resides in the membrane. The protein is Transmembrane protein 41A (Tmem41a) of Mus musculus (Mouse).